Reading from the N-terminus, the 338-residue chain is Ketol-acid reductoisomerase (NADP(+)) (338 aa).

One can recognise a KARI N-terminal Rossmann domain in the interval 1–181; that stretch reads MKVFYDKDCD…GGGRAGIIET (181 aa). NADP(+) is bound by residues 24-27, arginine 47, and serine 52; that span reads YGSQ. Histidine 107 is an active-site residue. NADP(+) is bound at residue glycine 133. Positions 182–327 constitute a KARI C-terminal knotted domain; sequence DFREETETDL…GKLRAMMPWI (146 aa). Mg(2+)-binding residues include aspartate 190, glutamate 194, glutamate 226, and glutamate 230. Serine 251 serves as a coordination point for substrate.

It belongs to the ketol-acid reductoisomerase family. It depends on Mg(2+) as a cofactor.

It carries out the reaction (2R)-2,3-dihydroxy-3-methylbutanoate + NADP(+) = (2S)-2-acetolactate + NADPH + H(+). The catalysed reaction is (2R,3R)-2,3-dihydroxy-3-methylpentanoate + NADP(+) = (S)-2-ethyl-2-hydroxy-3-oxobutanoate + NADPH + H(+). Its pathway is amino-acid biosynthesis; L-isoleucine biosynthesis; L-isoleucine from 2-oxobutanoate: step 2/4. The protein operates within amino-acid biosynthesis; L-valine biosynthesis; L-valine from pyruvate: step 2/4. Involved in the biosynthesis of branched-chain amino acids (BCAA). Catalyzes an alkyl-migration followed by a ketol-acid reduction of (S)-2-acetolactate (S2AL) to yield (R)-2,3-dihydroxy-isovalerate. In the isomerase reaction, S2AL is rearranged via a Mg-dependent methyl migration to produce 3-hydroxy-3-methyl-2-ketobutyrate (HMKB). In the reductase reaction, this 2-ketoacid undergoes a metal-dependent reduction by NADPH to yield (R)-2,3-dihydroxy-isovalerate. The polypeptide is Ketol-acid reductoisomerase (NADP(+)) (Bordetella petrii (strain ATCC BAA-461 / DSM 12804 / CCUG 43448)).